The primary structure comprises 363 residues: NADH-quinone oxidoreductase subunit H (363 aa).

Transmembrane regions (helical) follow at residues 29–49 (VLKI…YVVW), 62–82 (GPMY…KLLF), 96–116 (FIIA…VVPF), 127–147 (VGLL…ILAG), 163–183 (AAQV…VMIA), 202–222 (FFDW…VSGV), 239–257 (IVAG…LFFL), 264–286 (ILVS…QGWV), 299–319 (TGGW…YIWF), and 339–359 (FIPL…YGVI).

This sequence belongs to the complex I subunit 1 family. In terms of assembly, NDH-1 is composed of 14 different subunits. Subunits NuoA, H, J, K, L, M, N constitute the membrane sector of the complex.

The protein localises to the cell inner membrane. It catalyses the reaction a quinone + NADH + 5 H(+)(in) = a quinol + NAD(+) + 4 H(+)(out). In terms of biological role, NDH-1 shuttles electrons from NADH, via FMN and iron-sulfur (Fe-S) centers, to quinones in the respiratory chain. The immediate electron acceptor for the enzyme in this species is believed to be ubiquinone. Couples the redox reaction to proton translocation (for every two electrons transferred, four hydrogen ions are translocated across the cytoplasmic membrane), and thus conserves the redox energy in a proton gradient. This subunit may bind ubiquinone. The protein is NADH-quinone oxidoreductase subunit H of Xanthomonas campestris pv. campestris (strain 8004).